Consider the following 36-residue polypeptide: AHQDLSGKVFVIPMATSTSHVKLHARVSEPISAMTM.

The Pentraxin (PTX) domain occupies 6–36; sequence SGKVFVIPMATSTSHVKLHARVSEPISAMTM.

Belongs to the pentraxin family. Homopentamer. Discoid arrangement of 5 covalently bound subunits. Requires Ca(2+) as cofactor.

It localises to the secreted. The protein is Serum amyloid P-component of Salmo salar (Atlantic salmon).